Here is a 77-residue protein sequence, read N- to C-terminus: DNA-directed RNA polymerase subunit omega (77 aa).

Belongs to the RNA polymerase subunit omega family. As to quaternary structure, the RNAP catalytic core consists of 2 alpha, 1 beta, 1 beta' and 1 omega subunit. When a sigma factor is associated with the core the holoenzyme is formed, which can initiate transcription.

It carries out the reaction RNA(n) + a ribonucleoside 5'-triphosphate = RNA(n+1) + diphosphate. Promotes RNA polymerase assembly. Latches the N- and C-terminal regions of the beta' subunit thereby facilitating its interaction with the beta and alpha subunits. The chain is DNA-directed RNA polymerase subunit omega from Dichelobacter nodosus (strain VCS1703A).